Here is an 852-residue protein sequence, read N- to C-terminus: Cell surface glycoprotein (852 aa).

A signal peptide spans 1 to 34; that stretch reads MTDTTGKLRAVLLTALMVGSVIGAGVAFTGGAAA. Residue asparagine 36 is glycosylated (N-linked (GalNAc...) (glycosaminoglycan) asparagine). The disordered stretch occupies residues 84–131; that stretch reads KLDNEKEVSPATLSRTGGSDEGVPLQMPIPEDQSTGSYDSNGPDNDEA. Polar residues predominate over residues 115 to 126; that stretch reads DQSTGSYDSNGP. N-linked (Glc...) asparagine glycans are attached at residues asparagine 339, asparagine 398, asparagine 438, asparagine 513, asparagine 643, asparagine 727, asparagine 751, and asparagine 787. The tract at residues 772-828 is disordered; that stretch reads ELEEPDQTTVDQPENNQTMTTTMTETTTETTTEMTTTQENTTENGSEGTSDGESGGS. Residues 785–823 are compositionally biased toward low complexity; the sequence is ENNQTMTTTMTETTTETTTEMTTTQENTTENGSEGTSDG. O-linked (Gal...) threonine glycosylation is found at threonine 789, threonine 791, threonine 792, threonine 793, threonine 795, threonine 797, threonine 798, threonine 799, threonine 801, threonine 802, threonine 803, threonine 806, threonine 807, and threonine 808. A glycan (N-linked (Glc...) asparagine) is linked at asparagine 811. O-linked (Gal...) threonine glycans are attached at residues threonine 812 and threonine 813. The N-linked (Glc...) asparagine glycan is linked to asparagine 815. A helical transmembrane segment spans residues 829-849; it reads IPGFGVGVALVAVLGAALLAL. The PGF sorting signal motif lies at 830-832; the sequence is PGF.

Belongs to the halobacterial S-layer protein family. In terms of processing, N-linked glycan at Asn-36 consists of a glycosaminoglycan chain, constructed by a repeating sulfated pentasaccharide block composed of GlcNAc, GalNAc, Gal, GalA, 3-O-methyl-GalA, and sulfate in the molar ratio of 1:1:1:1:1:2; the other N-linked glycans contain Glc, GlcA and IdoA. O-linked glycans consist of Glc-Gal disaccharides. Post-translationally, the C-terminus (residues 770-778) is lipidated with diphytanylglyceryl phosphate. In terms of processing, cleaved by the archaeosortase ArtA at the C-terminus, with removal of a short hydrophobic segment.

The protein localises to the secreted. Its subcellular location is the cell wall. The protein resides in the S-layer. It is found in the cell membrane. Functionally, S-layer protein. The S-layer is a paracrystalline mono-layered assembly of proteins which coat the surface of the cell. The chain is Cell surface glycoprotein (csg) from Halobacterium salinarum (strain ATCC 29341 / DSM 671 / R1).